Consider the following 240-residue polypeptide: tRNA (guanine-N(1)-)-methyltransferase (240 aa).

S-adenosyl-L-methionine-binding positions include G108 and 127-132; that span reads LGDFIL.

The protein belongs to the RNA methyltransferase TrmD family. As to quaternary structure, homodimer.

The protein localises to the cytoplasm. The enzyme catalyses guanosine(37) in tRNA + S-adenosyl-L-methionine = N(1)-methylguanosine(37) in tRNA + S-adenosyl-L-homocysteine + H(+). Functionally, specifically methylates guanosine-37 in various tRNAs. The sequence is that of tRNA (guanine-N(1)-)-methyltransferase from Streptococcus mutans serotype c (strain ATCC 700610 / UA159).